The following is a 295-amino-acid chain: ATP synthase gamma chain (295 aa).

The protein belongs to the ATPase gamma chain family. F-type ATPases have 2 components, CF(1) - the catalytic core - and CF(0) - the membrane proton channel. CF(1) has five subunits: alpha(3), beta(3), gamma(1), delta(1), epsilon(1). CF(0) has three main subunits: a, b and c.

It is found in the cell inner membrane. In terms of biological role, produces ATP from ADP in the presence of a proton gradient across the membrane. The gamma chain is believed to be important in regulating ATPase activity and the flow of protons through the CF(0) complex. This is ATP synthase gamma chain from Maricaulis maris (strain MCS10) (Caulobacter maris).